A 160-amino-acid chain; its full sequence is Cytochrome b6-f complex subunit 4 (160 aa).

Helical transmembrane passes span leucine 36–valine 56, leucine 95–glutamate 115, and threonine 131–isoleucine 151.

This sequence belongs to the cytochrome b family. PetD subfamily. In terms of assembly, the 4 large subunits of the cytochrome b6-f complex are cytochrome b6, subunit IV (17 kDa polypeptide, PetD), cytochrome f and the Rieske protein, while the 4 small subunits are PetG, PetL, PetM and PetN. The complex functions as a dimer.

It is found in the cellular thylakoid membrane. Component of the cytochrome b6-f complex, which mediates electron transfer between photosystem II (PSII) and photosystem I (PSI), cyclic electron flow around PSI, and state transitions. The sequence is that of Cytochrome b6-f complex subunit 4 from Parasynechococcus marenigrum (strain WH8102).